Reading from the N-terminus, the 43-residue chain is Metallothionein B (43 aa).

The interval 1–16 is beta; sequence SCAGSCKCKNCRCRSC. The a divalent metal cation site is built by cysteine 2, cysteine 6, cysteine 8, cysteine 11, cysteine 13, cysteine 16, cysteine 20, cysteine 21, cysteine 23, cysteine 24, cysteine 28, cysteine 31, cysteine 35, and cysteine 37. Positions 17–43 are alpha; that stretch reads RKSCCSCCPAGCNNCVKGCVCKEPASS.

It belongs to the metallothionein superfamily. Type 1 family.

Metallothioneins have a high content of cysteine residues that bind various heavy metals. The protein is Metallothionein B of Colinus virginianus (Northern bobwhite).